A 209-amino-acid polypeptide reads, in one-letter code: MPIKVLFVDDHEMVRIGISSYLSTQSDIDVVGEGKSGKDAIEKAHELKPDLILMDLLMDDMDGVEATEQVKKDLPNIKVVMLTSYIEDNEVYRALDSGVDSYILKTTSASDIAEAIRKTYNNESVFEAEVLVKMRNRMKQRAELYEMLTEREMEILLLIAKGYSNQEIASASHITIKTVKTHVSNILSKLEVQDRTQAVIYAFQHNLIQ.

A Response regulatory domain is found at 4 to 120 (KVLFVDDHEM…DIAEAIRKTY (117 aa)). A 4-aspartylphosphate modification is found at Asp-55. In terms of domain architecture, HTH luxR-type spans 141–206 (RAELYEMLTE…QAVIYAFQHN (66 aa)). Residues 165 to 184 (NQEIASASHITIKTVKTHVS) constitute a DNA-binding region (H-T-H motif).

Phosphorylated by VraS.

It is found in the cytoplasm. Member of the two-component regulatory system VraS/VraR involved in the control of the cell wall peptidoglycan biosynthesis. The polypeptide is Response regulator protein VraR (vraR) (Staphylococcus saprophyticus subsp. saprophyticus (strain ATCC 15305 / DSM 20229 / NCIMB 8711 / NCTC 7292 / S-41)).